The primary structure comprises 72 residues: Translation initiation factor IF-1 (72 aa).

One can recognise an S1-like domain in the interval 1-72 (MAKEDAIELQ…SKGRIVFRAR (72 aa)).

This sequence belongs to the IF-1 family. As to quaternary structure, component of the 30S ribosomal translation pre-initiation complex which assembles on the 30S ribosome in the order IF-2 and IF-3, IF-1 and N-formylmethionyl-tRNA(fMet); mRNA recruitment can occur at any time during PIC assembly.

The protein localises to the cytoplasm. One of the essential components for the initiation of protein synthesis. Stabilizes the binding of IF-2 and IF-3 on the 30S subunit to which N-formylmethionyl-tRNA(fMet) subsequently binds. Helps modulate mRNA selection, yielding the 30S pre-initiation complex (PIC). Upon addition of the 50S ribosomal subunit IF-1, IF-2 and IF-3 are released leaving the mature 70S translation initiation complex. The sequence is that of Translation initiation factor IF-1 from Aliivibrio fischeri (strain ATCC 700601 / ES114) (Vibrio fischeri).